The following is a 2183-amino-acid chain: DNA polymerase epsilon catalytic subunit A (2183 aa).

Residues C2066, C2069, C2090, and C2093 each contribute to the Zn(2+) site. Residues 2066–2093 (CFKCKNPCDLDLCKDSCCTKSGFRCPLC) form a CysA-type zinc finger. [4Fe-4S] cluster-binding residues include C2124, C2127, C2139, and C2141. The CysB motif motif lies at 2124–2141 (CDKCRRVKEYELTEFCPC).

It belongs to the DNA polymerase type-B family. In terms of assembly, heterotetramer. Consists of 4 subunits: POL2, DPB2, DPB3 and DPB4. Requires [4Fe-4S] cluster as cofactor.

The protein resides in the nucleus. It catalyses the reaction DNA(n) + a 2'-deoxyribonucleoside 5'-triphosphate = DNA(n+1) + diphosphate. In terms of biological role, DNA polymerase II participates in chromosomal DNA replication. The protein is DNA polymerase epsilon catalytic subunit A (POL2) of Yarrowia lipolytica (strain CLIB 122 / E 150) (Yeast).